A 1025-amino-acid polypeptide reads, in one-letter code: Multidrug resistance protein MdtC (1025 aa).

A run of 12 helical transmembrane segments spans residues 3 to 23 (FFAL…AITL), 333 to 353 (EVEQ…FLFL), 360 to 380 (IIPA…MYLC), 387 to 407 (LSLM…IVVL), 431 to 451 (VGFT…PLLL), 463 to 483 (FAVT…TLTP), 528 to 548 (LVGV…ISIP), 853 to 873 (VILI…LYES), 875 to 895 (VHPL…LLAL), 897 to 917 (LFNA…IGIV), 953 to 973 (PIMM…LSGG), and 984 to 1004 (ITIV…TPVV).

It belongs to the resistance-nodulation-cell division (RND) (TC 2.A.6) family. MdtC subfamily. In terms of assembly, part of a tripartite efflux system composed of MdtA, MdtB and MdtC. MdtC forms a heteromultimer with MdtB.

The protein resides in the cell inner membrane. The polypeptide is Multidrug resistance protein MdtC (Shigella boydii serotype 4 (strain Sb227)).